A 115-amino-acid chain; its full sequence is ATP synthase subunits region ORF 7 (115 aa).

In Fuscovulum blasticum (Rhodobacter blasticus), this protein is ATP synthase subunits region ORF 7.